Reading from the N-terminus, the 230-residue chain is Large ribosomal subunit protein uL4 (230 aa).

Residues 51–105 (RAAARQGTHSTKTRGDVSGGGRKPYRQKGTGRARQGSMRAPQFTGGGIVHGPKLR) form a disordered region.

The protein belongs to the universal ribosomal protein uL4 family. Part of the 50S ribosomal subunit.

One of the primary rRNA binding proteins, this protein initially binds near the 5'-end of the 23S rRNA. It is important during the early stages of 50S assembly. It makes multiple contacts with different domains of the 23S rRNA in the assembled 50S subunit and ribosome. Functionally, forms part of the polypeptide exit tunnel. The polypeptide is Large ribosomal subunit protein uL4 (Mycobacterium leprae (strain Br4923)).